We begin with the raw amino-acid sequence, 89 residues long: Large ribosomal subunit protein bL31B (89 aa).

The protein belongs to the bacterial ribosomal protein bL31 family. Type B subfamily. Part of the 50S ribosomal subunit.

This chain is Large ribosomal subunit protein bL31B, found in Haemophilus ducreyi (strain 35000HP / ATCC 700724).